Here is a 146-residue protein sequence, read N- to C-terminus: Large ribosomal subunit protein uL24z (146 aa).

Disordered stretches follow at residues 1–26 and 121–146; these read MKYN…SSER and KAKG…QNVD. The span at 9-18 shows a compositional bias: basic residues; the sequence is SSRRKNRKAH. Basic and acidic residues predominate over residues 121–138; sequence KAKGRAAADKEKGTKFTS.

Belongs to the universal ribosomal protein uL24 family.

The chain is Large ribosomal subunit protein uL24z (RPL26A) from Arabidopsis thaliana (Mouse-ear cress).